We begin with the raw amino-acid sequence, 372 residues long: Glutamate 5-kinase (372 aa).

Lysine 14 contributes to the ATP binding site. 3 residues coordinate substrate: serine 54, aspartate 141, and asparagine 153. 173–174 contacts ATP; the sequence is TD. A PUA domain is found at 280 to 358; it reads RGNVTLDEGA…DEIESLLGYI (79 aa).

Belongs to the glutamate 5-kinase family.

The protein localises to the cytoplasm. It carries out the reaction L-glutamate + ATP = L-glutamyl 5-phosphate + ADP. The protein operates within amino-acid biosynthesis; L-proline biosynthesis; L-glutamate 5-semialdehyde from L-glutamate: step 1/2. Functionally, catalyzes the transfer of a phosphate group to glutamate to form L-glutamate 5-phosphate. This Nitrosospira multiformis (strain ATCC 25196 / NCIMB 11849 / C 71) protein is Glutamate 5-kinase.